A 492-amino-acid polypeptide reads, in one-letter code: GTPase Der (492 aa).

2 consecutive EngA-type G domains span residues 3 to 167 and 207 to 382; these read FTLA…EKFE and LQVA…DVWN. GTP contacts are provided by residues 9 to 16, 56 to 60, 119 to 122, 213 to 220, 260 to 264, and 325 to 328; these read GRPNVGKS, DSAGL, NKSE, GRPNAGKS, DTAGM, and NKWD. The KH-like domain maps to 383–469; that stretch reads RRVPTAALNR…RLTLRGQGDK (87 aa). Residues 461 to 492 form a disordered region; that stretch reads LTLRGQGDKNPYKGKKKSTPSRLRKHLEGRKS. Over residues 472–492 the composition is skewed to basic residues; the sequence is YKGKKKSTPSRLRKHLEGRKS.

The protein belongs to the TRAFAC class TrmE-Era-EngA-EngB-Septin-like GTPase superfamily. EngA (Der) GTPase family. In terms of assembly, associates with the 50S ribosomal subunit.

GTPase that plays an essential role in the late steps of ribosome biogenesis. This chain is GTPase Der, found in Ruegeria sp. (strain TM1040) (Silicibacter sp.).